Reading from the N-terminus, the 137-residue chain is Nucleoside diphosphate kinase (137 aa).

Residues Lys9, Phe57, Arg85, Thr91, Arg102, and Asn112 each coordinate ATP. Residue His115 is the Pros-phosphohistidine intermediate of the active site.

The protein belongs to the NDK family. In terms of assembly, homotetramer. Requires Mg(2+) as cofactor.

It localises to the cytoplasm. It catalyses the reaction a 2'-deoxyribonucleoside 5'-diphosphate + ATP = a 2'-deoxyribonucleoside 5'-triphosphate + ADP. The catalysed reaction is a ribonucleoside 5'-diphosphate + ATP = a ribonucleoside 5'-triphosphate + ADP. In terms of biological role, major role in the synthesis of nucleoside triphosphates other than ATP. The ATP gamma phosphate is transferred to the NDP beta phosphate via a ping-pong mechanism, using a phosphorylated active-site intermediate. The polypeptide is Nucleoside diphosphate kinase (Nitratiruptor sp. (strain SB155-2)).